The primary structure comprises 510 residues: Aromatic-L-amino-acid decarboxylase (510 aa).

Residues 1 to 17 show a composition bias toward polar residues; that stretch reads MSHIPISNTIPTKQTDG. A disordered region spans residues 1–28; it reads MSHIPISNTIPTKQTDGNGKANISPDKL. A substrate-binding site is contributed by threonine 117. Pyridoxal 5'-phosphate-binding residues include alanine 183, serine 184, histidine 227, aspartate 305, and asparagine 334. Histidine 227 contacts substrate. Histidine 227 is an active-site residue. Lysine 337 is modified (N6-(pyridoxal phosphate)lysine). The interval 358-384 is disordered; the sequence is NAFNVDPLYLKHDMQGSAPDYRHWQIP.

This sequence belongs to the group II decarboxylase family. As to quaternary structure, homodimer. Requires pyridoxal 5'-phosphate as cofactor. Hypoderm isoform is expressed only in hypodermal epithelium and the CNS isoform only in central nervous system. Expressed in the adult head (at protein level).

It carries out the reaction L-dopa + H(+) = dopamine + CO2. The catalysed reaction is 5-hydroxy-L-tryptophan + H(+) = serotonin + CO2. Its function is as follows. Catalyzes the decarboxylation of L-3,4-dihydroxyphenylalanine (L-DOPA) to dopamine and L-5-hydroxytryptophan (5-HTP) to serotonin. Catalyzes the formation of serotonin more efficiently than dopamine. Displays no activity to tyrosine. Variation in the synthesis of bioamines may be a factor contributing to natural variation in life span. The polypeptide is Aromatic-L-amino-acid decarboxylase (Ddc) (Drosophila melanogaster (Fruit fly)).